The primary structure comprises 151 residues: Major latex allergen Hev b 5 (151 aa).

Residues 1-151 form a disordered region; it reads MASVEVESAA…TEVPVEKTEE (151 aa). Position 2 is an N-acetylalanine (alanine 2). Basic and acidic residues predominate over residues 17 to 31; sequence ETPEVTKAEETKTEE. 2 stretches are compositionally biased toward low complexity: residues 36–45 and 53–64; these read PASEQETADA and TAAPAEPEAPAP. 3 stretches are compositionally biased toward basic and acidic residues: residues 65 to 80, 103 to 113, and 122 to 133; these read ETEK…KTEE, EEPKHETKETE, and EGEKPAEEEKPI. The span at 134–144 shows a compositional bias: low complexity; that stretch reads TEAAETATTEV.

To kiwi fruit protein PKIWI501. In terms of processing, the N-terminus is blocked.

In Hevea brasiliensis (Para rubber tree), this protein is Major latex allergen Hev b 5.